An 813-amino-acid polypeptide reads, in one-letter code: MTWPSEARPNINMEYRLHTVKVYVMMEDKQWKNVGTGQISSKYSEQLQGVCLLVHSLSDGSPIMECKIHPNVPYQKQQGKIIIWSEAKNHGMAIHFQEPNDCQEIWEDICQIQGKDPHVEITQELTDDLETFEHMPLIWNWVEMSNCEIHTLKNIAELFPFVFEMPSQKERLALFLENEGYIKKLLQLFHTCEKLKNMEGLYYLHNIIKGILFLNNTRLFNIMFSDEFFMDIVGCLEYDPALDQPKQYREFLTQNSKFKEVIPIIHSQLRQKIQQTYRMQYVHDIMLPTPSIFQTNLLSDITTMIFFNKINIITMIQEDENFLLEVFSQLKDNSIGDERRIELLLFLKEFCEFAKTLQSQKKNELLKTLIKLGIMSVLKVVVHMNDYQIQVGALDIFAYLVEYSPCLVRAYAMEEAQDSEDNDDLLINIMIKQMICDFDPEFSQGIIMTAVLHELLNPENMRTTAKGCERKVFLNFFYKRYMRKLIAPILSIRVKYDSNDNRVYICPDNYQNAQLLGAVLEILTFCVQYHSMYIKHYIFSNNLLRSILVLMSSKHTFLILCAVRFMRKIIGLKDKMYNHYIIKKNLFEPVVNAFMHNGHRYNMLNSAIIELFEFIRKENITSLIVNIVENFFRAFKSIEYVQTFKGLKTKYEEEKKRKSQRRKNLHSIMHPKMYYRHIEDMEVKVKADICCRGIIEEEERQGGGEEGAILPMGSDFTNNYDIFMKNKDTNESESAIEGQKIKSSEASECCPSHGDASATRMSRSHCSSLVPLVDYLYDTDDENDDDPYGNDKHEDEHEDEDEEPPPKRPNLST.

The tract at residues 730-813 (NESESAIEGQ…PPPKRPNLST (84 aa)) is disordered. Residues 777 to 788 (YDTDDENDDDPY) are compositionally biased toward acidic residues.

It belongs to the SMEK family.

This Mus musculus (Mouse) protein is Protein PPP4R3C1.